Consider the following 837-residue polypeptide: Striatin-interacting protein 1 (837 aa).

M1 carries the post-translational modification N-acetylmethionine. Residues 1–67 (MEPAAGTPGP…DSEGYSESPD (67 aa)) form a disordered region. Positions 18 to 35 (PQPPPPPPPATAQPPPGA) are enriched in pro residues. The span at 47-60 (KAREFNRNQRKDSE) shows a compositional bias: basic and acidic residues. Phosphoserine occurs at positions 59, 335, and 339. A disordered region spans residues 336–423 (PPASASDLIE…DRLTCPKGLP (88 aa)). Basic and acidic residues predominate over residues 356–377 (KALIKQDNLDAFNERDPYKADD). The span at 378 to 391 (SREEEEENDDDNSL) shows a compositional bias: acidic residues. S788 bears the Phosphoserine mark. Positions 796–837 (DNCLQSVLGQRVDLPEDFQMNYDLWLEREVFSKPISWEELLQ) are required for STRIPAK core complex formation.

The protein belongs to the STRIP family. Part of the core of STRIPAK complexes composed of PP2A catalytic and scaffolding subunits, the striatins (PP2A regulatory subunits), the striatin-associated proteins MOB4, STRIP1 and STRIP2, PDCD10 and members of the STE20 kinases, such as STK24 and STK26. The STRIPAK complex can be extended by adapter proteins such as SLMAP:SIKE1, CTTNBP2 or CTTNBP2NL. Interacts with CDC42BPB. Interacts with CTTNBP2NL.

Its subcellular location is the cytoplasm. In terms of biological role, plays a role in the regulation of cell morphology and cytoskeletal organization. Required in the cortical actin filament dynamics and cell shape. Part of the striatin-interacting phosphatase and kinase (STRIPAK) complexes. STRIPAK complexes have critical roles in protein (de)phosphorylation and are regulators of multiple signaling pathways including Hippo, MAPK, nuclear receptor and cytoskeleton remodeling. Different types of STRIPAK complexes are involved in a variety of biological processes such as cell growth, differentiation, apoptosis, metabolism and immune regulation. In Bos taurus (Bovine), this protein is Striatin-interacting protein 1 (STRIP1).